We begin with the raw amino-acid sequence, 208 residues long: uncharacterized protein (208 aa).

A disordered region spans residues 126 to 151 (VGSGSGSDSSSGSTSSPNTVNNYNSD). A compositionally biased stretch (low complexity) spans 131 to 141 (GSDSSSGSTSS).

This is an uncharacterized protein from Dictyostelium discoideum (Social amoeba).